Consider the following 1257-residue polypeptide: Insulin receptor substrate 4 (1257 aa).

In terms of domain architecture, PH spans 78 to 199; it reads EVCKRGYLRK…WYLLLSRLIL (122 aa). The 105-residue stretch at 231-335 folds into the IRS-type PTB domain; it reads YKDVWQVIVK…EKMRALCADE (105 aa). Disordered stretches follow at residues 406-653, 678-921, and 1179-1257; these read VAHS…GGRF, IPEG…SSDY, and QDVA…KRGR. Over residues 408-424 the composition is skewed to basic residues; it reads HSRRGRLHLPRGRRSRR. The YXXM motif 1 motif lies at 487–490; sequence YMPM. A compositionally biased stretch (gly residues) spans 495–509; sequence SGNGRGSGGGQGSNG. Positions 510 to 524 are enriched in low complexity; that stretch reads QGSSSHSSGGNQCSG. Composition is skewed to gly residues over residues 525–542 and 551–599; these read EGQG…GSGG and GTAG…SGKG. Over residues 627-640 the composition is skewed to pro residues; that stretch reads MPPPPPPPPPPPPA. Positions 641–650 are enriched in gly residues; the sequence is GGTGGKGKSG. The tract at residues 678–800 is CRK-binding; the sequence is IPEGAARGPH…KNPRNPQGGS (123 aa). 3 short sequence motifs (YXXM motif) span residues 700–703, 717–720, and 743–746; these read YVPM, YMPM, and YMMM. Positions 750 to 761 are enriched in pro residues; the sequence is VSPPPAPSPPKA. Residues 763–774 show a composition bias toward basic and acidic residues; sequence DTNKEDDSKDND. The short motif at 779-782 is the YXXM motif 5 element; that stretch reads YMFM. The span at 800-810 shows a compositional bias: low complexity; it reads SSSKSWSSYFS. Positions 815–826 are enriched in polar residues; it reads FRSSPLGQNDNS. The short motif at 828–831 is the YXXM motif 6 element; that stretch reads YVPM. A compositionally biased stretch (basic and acidic residues) spans 840 to 855; that stretch reads GLDKEVSYNWDPKDAA. Residues 895–897 form a GRB2-binding region; sequence ITK. Tyrosine 921 bears the Phosphotyrosine mark. The short motif at 921–924 is the YXXM motif 7 element; that stretch reads YVNM. Residues 1236–1257 show a composition bias toward basic and acidic residues; the sequence is DTHVRMDFARRDNQFDSPKRGR.

As to quaternary structure, interacts with SOCS6 in response to stimulation with either insulin or IGF1. Interacts with CRK and CRKL. Interaction with CRK is stronger than with CRKL. Interacts with CRK via the phosphorylated YXXM motifs. Interacts with GRB2 and PIK3R1. Interacts with PLC-gamma, SHC1, PTK6, PPP4C and NISCH. Interacts with ASB4; this interaction promotes IRS4 proteasomal degradation. Post-translationally, phosphorylated on tyrosine residues in response to both insulin and IGF1 signaling. Phosphorylated on Tyr-921 in response to FGF2 signaling. Phosphorylation of Tyr-921 is required for GRB2, phospholipase C-gamma and phosphatidylinositol 3-kinase interaction. In terms of processing, ubiquitinated in a ASB4-dependent manner, leading to proteasomal degradation. Expressed in myoblasts. Expressed in liver and hepatocellular carcinoma.

The protein resides in the cell membrane. Functionally, acts as an interface between multiple growth factor receptors possessing tyrosine kinase activity, such as insulin receptor, IGF1R and FGFR1, and a complex network of intracellular signaling molecules containing SH2 domains. Involved in the IGF1R mitogenic signaling pathway. Promotes the AKT1 signaling pathway and BAD phosphorylation during insulin stimulation without activation of RPS6KB1 or the inhibition of apoptosis. Interaction with GRB2 enhances insulin-stimulated mitogen-activated protein kinase activity. May be involved in nonreceptor tyrosine kinase signaling in myoblasts. Plays a pivotal role in the proliferation/differentiation of hepatoblastoma cell through EPHB2 activation upon IGF1 stimulation. May play a role in the signal transduction in response to insulin and to a lesser extent in response to IL4 and GH on mitogenesis. Plays a role in growth, reproduction and glucose homeostasis. May act as negative regulators of the IGF1 signaling pathway by suppressing the function of IRS1 and IRS2. This is Insulin receptor substrate 4 (IRS4) from Homo sapiens (Human).